The following is a 393-amino-acid chain: Putative bacilysin exporter BacE (393 aa).

Helical transmembrane passes span 11 to 31 (LLFG…ALLI), 43 to 63 (SGVI…GVLV), 69 to 89 (VKIM…LTFL), 92 to 112 (GEYP…GVFF), 133 to 155 (LFAK…FLLG), 160 to 177 (LAVA…FFIS), 215 to 235 (MFTM…FPIV), 244 to 264 (IGNF…AALV), 287 to 307 (ALFL…LFFI), and 353 to 373 (IVDA…LFLH).

This sequence belongs to the major facilitator superfamily.

Its subcellular location is the cell membrane. In terms of biological role, part of the bacilysin biosynthesis operon. May be involved in self-resistance to bacilysin by permitting efflux of this antibiotic. The polypeptide is Putative bacilysin exporter BacE (bacE) (Bacillus subtilis).